Reading from the N-terminus, the 396-residue chain is Probable sugar efflux transporter (396 aa).

Transmembrane regions (helical) follow at residues 15-35 (VVTL…PVGL), 50-70 (VGIM…PFML), 81-101 (LICL…AWNF), 103-123 (VLVI…SITA), 136-156 (AQAL…GLPI), 169-189 (TFFA…KLLP), 209-229 (PALM…YTAY), 246-266 (FATV…LVFG), 275-295 (SLVS…LPAA), 301-321 (LAIL…GMQV), 333-353 (VAMA…ALVG), and 364-384 (AIGY…VLIF).

It belongs to the major facilitator superfamily. SotB (TC 2.A.1.2) family.

It localises to the cell inner membrane. Involved in the efflux of sugars. The physiological role may be the reduction of the intracellular concentration of toxic sugars or sugar metabolites. The protein is Probable sugar efflux transporter of Salmonella paratyphi C (strain RKS4594).